The sequence spans 1984 residues: Vitellogenin receptor Yl (1984 aa).

A compositionally biased stretch (basic and acidic residues) spans 1-19; sequence MCQAEHQVHPSEQRIRVES. Residues 1 to 48 are disordered; sequence MCQAEHQVHPSEQRIRVESPKMTASRRGFNLTSQTRAHPSSGGSTSSR. Asn-30 is a glycosylation site (N-linked (GlcNAc...) asparagine). Positions 30 to 48 are enriched in polar residues; that stretch reads NLTSQTRAHPSSGGSTSSR. 5 consecutive LDL-receptor class A domains span residues 89-125, 128-167, 183-221, 226-263, and 265-305; these read RCDA…LDCD, LCRP…LNCP, SCSK…AGCK, TCPG…RGCL, and LCEP…DLCH. Disulfide bonds link Cys-90–Cys-102, Cys-97–Cys-115, Cys-109–Cys-124, Cys-129–Cys-144, Cys-137–Cys-157, Cys-151–Cys-166, Cys-184–Cys-197, Cys-191–Cys-210, Cys-204–Cys-220, Cys-227–Cys-239, Cys-234–Cys-253, Cys-247–Cys-262, Cys-266–Cys-281, Cys-275–Cys-294, Cys-288–Cys-304, Cys-310–Cys-321, Cys-315–Cys-331, Cys-352–Cys-363, Cys-359–Cys-372, and Cys-374–Cys-387. The EGF-like 1 domain occupies 306-343; sequence SKPDCDAKKCALGAKCHMMPASGAECFCPKGFRLAKFE. The EGF-like 2; calcium-binding domain maps to 348–388; that stretch reads DVDECKEQDDLCSQGCENTSGGYRCVCDAGYLLDKDNRTCR. 3 N-linked (GlcNAc...) asparagine glycosylation sites follow: Asn-365, Asn-384, and Asn-429. LDL-receptor class B repeat units follow at residues 441 to 485, 486 to 528, 529 to 572, and 573 to 615; these read SHIY…DWLT, QNIY…WPQK, GLMF…DMHQ, and QRIY…FEDQ. 3 N-linked (GlcNAc...) asparagine glycosylation sites follow: Asn-666, Asn-749, and Asn-782. 4 LDL-receptor class B repeats span residues 750–792, 793–836, 884–925, and 934–940; these read GSLI…DHLS, RNLY…MPAE, QTIF…VHHD, and PRIYWTH. A glycan (N-linked (GlcNAc...) asparagine) is linked at Asn-1022. LDL-receptor class A domains are found at residues 1024-1063, 1073-1110, 1117-1153, 1157-1194, and 1197-1233; these read TCVE…MNCD, LCSP…QHCE, KCHV…LLCE, RCEP…DKCV, and SCPP…LNCG. Disulfide bonds link Cys-1025/Cys-1040, Cys-1035/Cys-1053, Cys-1047/Cys-1062, Cys-1074/Cys-1087, Cys-1081/Cys-1100, Cys-1094/Cys-1109, Cys-1118/Cys-1130, Cys-1125/Cys-1143, Cys-1137/Cys-1152, Cys-1158/Cys-1170, Cys-1165/Cys-1183, Cys-1177/Cys-1193, Cys-1198/Cys-1210, Cys-1205/Cys-1223, and Cys-1217/Cys-1232. Asn-1240 is a glycosylation site (N-linked (GlcNAc...) asparagine). 2 LDL-receptor class A domains span residues 1242 to 1280 and 1282 to 1319; these read SCAE…ADCG and VCSI…LSCE. 6 disulfides stabilise this stretch: Cys-1243/Cys-1257, Cys-1250/Cys-1270, Cys-1264/Cys-1279, Cys-1283/Cys-1296, Cys-1290/Cys-1309, and Cys-1303/Cys-1318. Asn-1265 is a glycosylation site (N-linked (GlcNAc...) asparagine). Residue Asn-1326 is glycosylated (N-linked (GlcNAc...) asparagine). An LDL-receptor class A 13 domain is found at 1339–1376; that stretch reads SCRPHLFDCQDGECVDLSRVCNNFPDCTNGHDEGPKCA. 5 disulfides stabilise this stretch: Cys-1340-Cys-1352, Cys-1347-Cys-1365, Cys-1359-Cys-1375, Cys-1422-Cys-1432, and Cys-1428-Cys-1441. The EGF-like 3; calcium-binding domain occupies 1418 to 1453; that stretch reads DIDECQEQQPCAQLCENTLGGYQCQCHADFMLRQDR. Asn-1475 and Asn-1490 each carry an N-linked (GlcNAc...) asparagine glycan. LDL-receptor class B repeat units lie at residues 1588 to 1637 and 1638 to 1687; these read ARIF…DPHQ and QLLY…YENN. A helical membrane pass occupies residues 1800-1820; the sequence is WLMALFVLAAGSLIAGLGYMY. Residues 1821–1984 lie on the Cytoplasmic side of the membrane; sequence YQYRQRGHTD…GNDANARFVS (164 aa). Residue Ser-1926 is modified to Phosphoserine. Disordered regions lie at residues 1927 to 1951 and 1965 to 1984; these read KLHA…RQVP and SAGQ…RFVS. Positions 1932–1946 are enriched in gly residues; that stretch reads DGGGAGGDGDGGRGV.

This sequence belongs to the LDLR family. In terms of assembly, interacts with osk (isoform A). In terms of tissue distribution, ovary.

Its subcellular location is the cell membrane. It is found in the cytoplasm. The protein resides in the cell cortex. The protein localises to the cytoplasmic vesicle. It localises to the clathrin-coated vesicle membrane. Its subcellular location is the early endosome membrane. It is found in the endosome. The protein resides in the multivesicular body lumen. In terms of biological role, cell surface receptor involved in uptake of vitellogenins (yolk proteins) into developing oocytes by receptor-mediated endocytosis. May also mediate uptake of apolpp/apolipophorins and their incorporation into yolk granules. Along with its ligands, required for maintenance of microtubule plus-end orientation towards the posterior pole of oocytes. Involved in polarized localization of germ plasm components, such as osk mRNA and vas protein, to the oocyte posterior cortex. Receptor-mediated endocytosis of vitellogenin receptor ligands is critical for osk (isoform A) mediated actin reorganization and the anchoring of germ plasm components to the oocyte cortex. The polypeptide is Vitellogenin receptor Yl (Drosophila melanogaster (Fruit fly)).